We begin with the raw amino-acid sequence, 447 residues long: ATP-dependent 6-phosphofructokinase (447 aa).

ATP is bound by residues Gly88, 154-155 (RG), and 179-182 (GDGT). Asp180 is a Mg(2+) binding site. Substrate is bound by residues 208–210 (TVD), 253–255 (MGR), Glu315, and 368–371 (YIIR). Residue Asp210 is the Proton acceptor of the active site.

Belongs to the phosphofructokinase type A (PFKA) family. PPi-dependent PFK group II subfamily. Atypical ATP-dependent clade 'X' sub-subfamily. In terms of assembly, homodimer. The cofactor is Mg(2+).

Its subcellular location is the cytoplasm. It carries out the reaction beta-D-fructose 6-phosphate + ATP = beta-D-fructose 1,6-bisphosphate + ADP + H(+). The protein operates within carbohydrate degradation; glycolysis; D-glyceraldehyde 3-phosphate and glycerone phosphate from D-glucose: step 3/4. In terms of biological role, catalyzes the phosphorylation of D-fructose 6-phosphate to fructose 1,6-bisphosphate by ATP, the first committing step of glycolysis. In Borreliella burgdorferi (strain ATCC 35210 / DSM 4680 / CIP 102532 / B31) (Borrelia burgdorferi), this protein is ATP-dependent 6-phosphofructokinase.